Here is a 156-residue protein sequence, read N- to C-terminus: ATP synthase subunit b (156 aa).

Residues 7-27 form a helical membrane-spanning segment; sequence LFAQMVVFLILAWFTMKFVWP.

It belongs to the ATPase B chain family. In terms of assembly, F-type ATPases have 2 components, F(1) - the catalytic core - and F(0) - the membrane proton channel. F(1) has five subunits: alpha(3), beta(3), gamma(1), delta(1), epsilon(1). F(0) has three main subunits: a(1), b(2) and c(10-14). The alpha and beta chains form an alternating ring which encloses part of the gamma chain. F(1) is attached to F(0) by a central stalk formed by the gamma and epsilon chains, while a peripheral stalk is formed by the delta and b chains.

It is found in the cell inner membrane. Functionally, f(1)F(0) ATP synthase produces ATP from ADP in the presence of a proton or sodium gradient. F-type ATPases consist of two structural domains, F(1) containing the extramembraneous catalytic core and F(0) containing the membrane proton channel, linked together by a central stalk and a peripheral stalk. During catalysis, ATP synthesis in the catalytic domain of F(1) is coupled via a rotary mechanism of the central stalk subunits to proton translocation. Component of the F(0) channel, it forms part of the peripheral stalk, linking F(1) to F(0). In Paraburkholderia phymatum (strain DSM 17167 / CIP 108236 / LMG 21445 / STM815) (Burkholderia phymatum), this protein is ATP synthase subunit b.